The following is a 557-amino-acid chain: Membrane protein insertase YidC (557 aa).

The next 3 helical transmembrane spans lie at 371 to 391 (WGWS…PLSA), 437 to 457 (LGGC…YWVL), and 515 to 535 (PIVF…YWVV).

This sequence belongs to the OXA1/ALB3/YidC family. Type 1 subfamily. Interacts with the Sec translocase complex via SecD. Specifically interacts with transmembrane segments of nascent integral membrane proteins during membrane integration.

The protein resides in the cell inner membrane. Its function is as follows. Required for the insertion and/or proper folding and/or complex formation of integral membrane proteins into the membrane. Involved in integration of membrane proteins that insert both dependently and independently of the Sec translocase complex, as well as at least some lipoproteins. Aids folding of multispanning membrane proteins. The chain is Membrane protein insertase YidC from Polynucleobacter necessarius subsp. necessarius (strain STIR1).